We begin with the raw amino-acid sequence, 511 residues long: 2,3-bisphosphoglycerate-independent phosphoglycerate mutase (511 aa).

Position 12 (Asp-12) interacts with Mn(2+). Residue Tyr-36 is modified to Phosphotyrosine. Ser-62 lines the Mn(2+) pocket. The active-site Phosphoserine intermediate is the Ser-62. Substrate-binding positions include His-123, 153–154 (RD), Arg-185, Arg-191, 261–264 (RPDR), and Lys-336. Mn(2+) is bound by residues Asp-403, His-407, Asp-444, His-445, and His-462.

Belongs to the BPG-independent phosphoglycerate mutase family. In terms of assembly, monomer. Mn(2+) serves as cofactor.

The enzyme catalyses (2R)-2-phosphoglycerate = (2R)-3-phosphoglycerate. Its pathway is carbohydrate degradation; glycolysis; pyruvate from D-glyceraldehyde 3-phosphate: step 3/5. Its function is as follows. Essential for rapid growth and for sporulation. Catalyzes the interconversion of 2-phosphoglycerate and 3-phosphoglycerate. This is 2,3-bisphosphoglycerate-independent phosphoglycerate mutase from Bacillus licheniformis (strain ATCC 14580 / DSM 13 / JCM 2505 / CCUG 7422 / NBRC 12200 / NCIMB 9375 / NCTC 10341 / NRRL NRS-1264 / Gibson 46).